A 457-amino-acid polypeptide reads, in one-letter code: uncharacterized protein (457 aa).

One can recognise a TRAM domain in the interval 6–64 (PVHKGEVLDVTIMDLTYQGMGVAKVDNYPIFIENALPEEKITVKVTKTTKNFAFGDVEK). S-adenosyl-L-methionine contacts are provided by Gln-287, Tyr-316, Glu-337, and Asp-385. The active-site Nucleophile is Cys-412.

This sequence belongs to the class I-like SAM-binding methyltransferase superfamily. RNA M5U methyltransferase family.

This is an uncharacterized protein from Lactiplantibacillus plantarum (strain ATCC BAA-793 / NCIMB 8826 / WCFS1) (Lactobacillus plantarum).